A 289-amino-acid polypeptide reads, in one-letter code: ATP synthase gamma chain (289 aa).

This sequence belongs to the ATPase gamma chain family. As to quaternary structure, F-type ATPases have 2 components, CF(1) - the catalytic core - and CF(0) - the membrane proton channel. CF(1) has five subunits: alpha(3), beta(3), gamma(1), delta(1), epsilon(1). CF(0) has three main subunits: a, b and c.

The protein resides in the cell membrane. Functionally, produces ATP from ADP in the presence of a proton gradient across the membrane. The gamma chain is believed to be important in regulating ATPase activity and the flow of protons through the CF(0) complex. The polypeptide is ATP synthase gamma chain (Mycoplasmopsis synoviae (strain 53) (Mycoplasma synoviae)).